The chain runs to 291 residues: MKSGFVSIIGRTNAGKSTLINSLLEEKIALVSHKQNATRRKIKAIVMHEKNQIIFIDTPGLHESGATLNQLLVQSAIKSMGDCDVILFVASVFDSTKDYENFLSLNPQVPHIIALNKVDLTDNATLLKKLSEYAKFSQHFKAIIPYSSKKKSYKKGLLDEIVKYLDKHEYFYDPEFLSASSEKELYRDFILESIYENLSDELPYSSEVLIHRTKDTPNLLILEANIITDTNSHKGMLIGKEGATLKRIGKDARFKISKLAQKKVLLKLFVTVKKNWQKDEEFLKKLLNDEN.

In terms of domain architecture, Era-type G spans 2 to 167 (KSGFVSIIGR…LDEIVKYLDK (166 aa)). The tract at residues 10–17 (GRTNAGKS) is G1. A GTP-binding site is contributed by 10-17 (GRTNAGKS). A G2 region spans residues 36-40 (NATRR). The G3 stretch occupies residues 57-60 (DTPG). GTP-binding positions include 57–61 (DTPGL) and 116–119 (NKVD). Residues 116-119 (NKVD) form a G4 region. The segment at 146–148 (YSS) is G5. Residues 186–274 (YRDFILESIY…LLKLFVTVKK (89 aa)) form the KH type-2 domain.

Belongs to the TRAFAC class TrmE-Era-EngA-EngB-Septin-like GTPase superfamily. Era GTPase family. In terms of assembly, monomer.

The protein localises to the cytoplasm. The protein resides in the cell inner membrane. In terms of biological role, an essential GTPase that binds both GDP and GTP, with rapid nucleotide exchange. Plays a role in 16S rRNA processing and 30S ribosomal subunit biogenesis and possibly also in cell cycle regulation and energy metabolism. This is GTPase Era from Campylobacter jejuni subsp. jejuni serotype O:6 (strain 81116 / NCTC 11828).